The sequence spans 199 residues: Dephospho-CoA kinase (199 aa).

One can recognise a DPCK domain in the interval 4–199; it reads VIGLTGGIAS…DNVLQKWNIS (196 aa). Residue 12 to 17 coordinates ATP; the sequence is ASGKST.

The protein belongs to the CoaE family.

The protein resides in the cytoplasm. It catalyses the reaction 3'-dephospho-CoA + ATP = ADP + CoA + H(+). The protein operates within cofactor biosynthesis; coenzyme A biosynthesis; CoA from (R)-pantothenate: step 5/5. Catalyzes the phosphorylation of the 3'-hydroxyl group of dephosphocoenzyme A to form coenzyme A. This is Dephospho-CoA kinase from Oceanobacillus iheyensis (strain DSM 14371 / CIP 107618 / JCM 11309 / KCTC 3954 / HTE831).